A 1025-amino-acid polypeptide reads, in one-letter code: MKRGFSSGDLSSEVDDVDPNSLPPAARPIQDQPTKPPVAGGPPNMPPPPAPGQPAGAAPELSLSFGAGKTPATAAPAPPRGVSAPTSPAKSRESLLQRVQSLTGAARDQGASILGAAVQSATQRAPAFSKDKYFTLLVLDDQNTDWSKYFRGRRLHGDFDIRVEQAEFRDITVVSSADTGPVVTMAAYRSGTRVARSFRPDFVLIRQPPRDGSSDYRSTILGLKYGGVPSINSLHSIYQFQDKPWVFSHLLQLQRRLGRDGFPLIEQTFFPNPRDLFQFTKFPSVLKAGHCHGGVATARLENQSALQDAAGLVSGAGNDSHCYCTIEPYIDAKFSVHIQKIGNNYKAFMRKSITGNWKTNQGSAMLEQITLTEKYKSWVDEISELFGGMEVCGLSVVVAKDGREYIISACDSTFALIGDTQEEDRRQIADLVSGRMQNVCRPSMAQTGPGKLPSRSSVSSRAESPTDEGVAPTPPLPAGPRPAPMGGPPPIPERTSPAVGSIGRLSSRSSISEVPEEPSSSGPSTVGGVRRDSQTSQSSTISSSVSRAGQRPPQTQNSVVEDAEDTMKNLRKTFAGIFGDMXEIANKKRGRTASETSSGSGPGSVPSSAGPGSGFSSSFLGKQFSFAGKGEGVISTQPTQRPSEEPPAIPTTASSAVRPESSVSVSDSRNTDTLTERAGAGYQPVTNYEQQERVNPFDKEPSKSGSAASIHTSSSSSISSSSISSRINRNGNAIQSPPPPAGPPPPPPTNVTAVGSNANSSSGYRNSFSSSLSKDKTSYGNYGSTTSVETITRMDTNTTNIGATATEAGEASGVTAITNISNSDGIVAPTTGTITTSVTTNDWRSAIGMRSASVYSAPAAVTTVLPGDTSGYDSNSIASQGEGLNNPSDLPSYTRPSYSRSESNASKHSDLDVIFGDSKTTPASYGNGKYTRAAGSISDADMIFGGPPSNYKTDRFGASKSMSMTSGGVGSGNGSGSGLGGYKIYDSIQNAAFSDFSDSGSMSSIGSHTKRWSASKEEDDELDLK.

Disordered stretches follow at residues 1 to 94 (MKRG…SRES), 439 to 784 (VCRP…NYGS), 872 to 910 (YDSN…KHSD), and 995 to 1025 (DFSD…LDLK). A compositionally biased stretch (pro residues) spans 34-52 (TKPPVAGGPPNMPPPPAPG). Over residues 454–463 (SRSSVSSRAE) the composition is skewed to low complexity. The segment covering 472-492 (PTPPLPAGPRPAPMGGPPPIP) has biased composition (pro residues). 2 stretches are compositionally biased toward low complexity: residues 499–546 (VGSI…SSVS) and 594–626 (SETS…QFSF). Ser539 is modified (phosphoserine). Positions 651 to 673 (TTASSAVRPESSVSVSDSRNTDT) are enriched in polar residues. Positions 690-702 (QQERVNPFDKEPS) are enriched in basic and acidic residues. Positions 703–725 (KSGSAASIHTSSSSSISSSSISS) are enriched in low complexity. Residues 726 to 735 (RINRNGNAIQ) show a composition bias toward polar residues. Residues 736 to 749 (SPPPPAGPPPPPPT) are compositionally biased toward pro residues. The span at 750–759 (NVTAVGSNAN) shows a compositional bias: polar residues. A compositionally biased stretch (low complexity) spans 760-772 (SSSGYRNSFSSSL). The span at 872 to 904 (YDSNSIASQGEGLNNPSDLPSYTRPSYSRSESN) shows a compositional bias: polar residues. Positions 995-1007 (DFSDSGSMSSIGS) are enriched in low complexity.

Belongs to the synapsin family. Identified in a complex with Syt1 and nwk. Widely expressed in the embryonic and adult nervous system synaptic terminals.

It localises to the synapse. Functionally, plays a significant role in nervous system function, which is subtle at the cellular level but manifests itself in complex behavior. The sequence is that of Synapsin (Syn) from Drosophila melanogaster (Fruit fly).